The sequence spans 329 residues: 4-hydroxythreonine-4-phosphate dehydrogenase (329 aa).

2 residues coordinate substrate: His-136 and Thr-137. Positions 166, 211, and 266 each coordinate a divalent metal cation. Substrate contacts are provided by Lys-274, Asn-283, and Arg-292.

The protein belongs to the PdxA family. Homodimer. The cofactor is Zn(2+). Mg(2+) is required as a cofactor. Co(2+) serves as cofactor.

Its subcellular location is the cytoplasm. It catalyses the reaction 4-(phosphooxy)-L-threonine + NAD(+) = 3-amino-2-oxopropyl phosphate + CO2 + NADH. Its pathway is cofactor biosynthesis; pyridoxine 5'-phosphate biosynthesis; pyridoxine 5'-phosphate from D-erythrose 4-phosphate: step 4/5. Its function is as follows. Catalyzes the NAD(P)-dependent oxidation of 4-(phosphooxy)-L-threonine (HTP) into 2-amino-3-oxo-4-(phosphooxy)butyric acid which spontaneously decarboxylates to form 3-amino-2-oxopropyl phosphate (AHAP). In Escherichia coli O81 (strain ED1a), this protein is 4-hydroxythreonine-4-phosphate dehydrogenase.